We begin with the raw amino-acid sequence, 135 residues long: Large ribosomal subunit protein uL22c (135 aa).

The protein belongs to the universal ribosomal protein uL22 family. As to quaternary structure, part of the 50S ribosomal subunit.

It localises to the plastid. In terms of biological role, this protein binds specifically to 23S rRNA. Functionally, the globular domain of the protein is located near the polypeptide exit tunnel on the outside of the subunit, while an extended beta-hairpin is found that lines the wall of the exit tunnel in the center of the 70S ribosome. This chain is Large ribosomal subunit protein uL22c (rpl22), found in Cuscuta exaltata (Tall dodder).